Here is a 364-residue protein sequence, read N- to C-terminus: Monocarboxylate 2-oxoacid-binding periplasmic protein all3028 (364 aa).

The first 26 residues, 1-26 (MKRREVLNTAAIATATTALVSCTQTN), serve as a signal peptide directing secretion. Residues 103 to 104 (YY), glutamine 160, and arginine 181 contribute to the substrate site. Glutamine 160 lines the Na(+) pocket. 3 residues coordinate Na(+): glutamate 218, tryptophan 219, and glutamate 244.

This sequence belongs to the bacterial solute-binding protein 7 family. As to quaternary structure, homodimer. The complex comprises the extracytoplasmic solute receptor protein all3028, and the two putative transmembrane proteins alr3026 and alr3027.

Its subcellular location is the periplasm. Its activity is regulated as follows. Pyruvate uptake inhibited by 2-oxobutyrate, 2-oxovalerate, 2-oxoisovalerate, 2-oxoisocaproate and 2-oxo-3-methylvalerate. In terms of biological role, part of the tripartite ATP-independent periplasmic (TRAP) transport system involved in the uptake of monocarboxylate 2-oxoacids. This protein specifically binds monocarboxylate 2-oxoacids including pyruvate, 2-oxobutyrate, 2-oxovalerate, 2-oxoisovalerate, 2-oxoisocaproate and 2-oxo-3-methylvalerate. Is not able to bind mannitol. This Nostoc sp. (strain PCC 7120 / SAG 25.82 / UTEX 2576) protein is Monocarboxylate 2-oxoacid-binding periplasmic protein all3028.